A 557-amino-acid chain; its full sequence is Cytochrome P450 734A2 (557 aa).

The chain crosses the membrane as a helical span at residues 13–35 (WATWRVAAVAAAAAVWVTMHVAA). A heme-binding site is contributed by Cys495.

The protein belongs to the cytochrome P450 family. Requires heme as cofactor. Expressed in roots, shoot apex, leaf sheaths and leaf blades.

Its subcellular location is the membrane. In terms of biological role, cytochrome P450 involved in brassinosteroids (BRs) inactivation and regulation of BRs homeostasis. Is a multifunctional and multisubstrate enzyme that controls the endogenous bioactive BR content both by direct inactivation of castasterone (CS) and by decreasing the levels of BR precursors. Catalyzes the oxidation of carbon 22 hydroxylated BR intermediates to produce C26 oxidized metabolites. The sequence is that of Cytochrome P450 734A2 (CYP734A2) from Oryza sativa subsp. japonica (Rice).